The chain runs to 275 residues: Cytochrome c oxidase subunit 3 (275 aa).

7 helical membrane passes run Pro-22–Phe-42, Ser-52–Phe-72, Gly-96–Phe-116, Pro-132–Leu-152, Ala-173–Ile-193, Phe-211–Val-231, and Ile-253–Trp-273.

It belongs to the cytochrome c oxidase subunit 3 family. Component of the cytochrome c oxidase (complex IV, CIV), a multisubunit enzyme composed of a catalytic core of 3 subunits and several supernumerary subunits. The complex exists as a monomer or a dimer and forms supercomplexes (SCs) in the inner mitochondrial membrane with ubiquinol-cytochrome c oxidoreductase (cytochrome b-c1 complex, complex III, CIII).

Its subcellular location is the mitochondrion inner membrane. The catalysed reaction is 4 Fe(II)-[cytochrome c] + O2 + 8 H(+)(in) = 4 Fe(III)-[cytochrome c] + 2 H2O + 4 H(+)(out). In terms of biological role, component of the cytochrome c oxidase, the last enzyme in the mitochondrial electron transport chain which drives oxidative phosphorylation. The respiratory chain contains 3 multisubunit complexes succinate dehydrogenase (complex II, CII), ubiquinol-cytochrome c oxidoreductase (cytochrome b-c1 complex, complex III, CIII) and cytochrome c oxidase (complex IV, CIV), that cooperate to transfer electrons derived from NADH and succinate to molecular oxygen, creating an electrochemical gradient over the inner membrane that drives transmembrane transport and the ATP synthase. Cytochrome c oxidase is the component of the respiratory chain that catalyzes the reduction of oxygen to water. Electrons originating from reduced cytochrome c in the intermembrane space (IMS) are transferred via the dinuclear copper A center (CU(A)) of subunit 2 and heme A of subunit 1 to the active site in subunit 1, a binuclear center (BNC) formed by heme A3 and copper B (CU(B)). The BNC reduces molecular oxygen to 2 water molecules using 4 electrons from cytochrome c in the IMS and 4 protons from the mitochondrial matrix. The protein is Cytochrome c oxidase subunit 3 (COX3) of Mycosarcoma maydis (Corn smut fungus).